The following is a 358-amino-acid chain: tRNA-specific 2-thiouridylase MnmA (358 aa).

ATP is bound by residues 8 to 15 and leucine 34; that span reads GLSGGVDS. Cysteine 95 (nucleophile) is an active-site residue. The cysteines at positions 95 and 194 are disulfide-linked. Glycine 120 is an ATP binding site. Residues 144 to 146 form an interaction with tRNA region; it reads KDQ. Residue cysteine 194 is the Cysteine persulfide intermediate of the active site. An interaction with tRNA region spans residues 299 to 300; the sequence is RY.

Belongs to the MnmA/TRMU family.

The protein resides in the cytoplasm. The enzyme catalyses S-sulfanyl-L-cysteinyl-[protein] + uridine(34) in tRNA + AH2 + ATP = 2-thiouridine(34) in tRNA + L-cysteinyl-[protein] + A + AMP + diphosphate + H(+). Its function is as follows. Catalyzes the 2-thiolation of uridine at the wobble position (U34) of tRNA, leading to the formation of s(2)U34. This chain is tRNA-specific 2-thiouridylase MnmA, found in Synechocystis sp. (strain ATCC 27184 / PCC 6803 / Kazusa).